The primary structure comprises 117 residues: Toxin CSTX-8 (117 aa).

The first 20 residues, 1 to 20 (MKVLVICAVLFLAIFSNSSA), serve as a signal peptide directing secretion. Positions 21 to 47 (ETEDDFLEDESFQADDVIPFLASEQVR) are excised as a propeptide. Cystine bridges form between C50–C65, C57–C74, C64–C95, and C76–C93. A propeptide spanning residues 82-87 (RSETDR) is cleaved from the precursor. Residue T116 is modified to Threonine amide.

It belongs to the neurotoxin 19 (CSTX) family. 12 subfamily. As to quaternary structure, heterodimer of A and B chains; disulfide-linked. Interacts with CSTX-1 (AC P81694), and with CSTX-9 (AC P58604). In terms of tissue distribution, expressed by the venom gland.

It localises to the secreted. Its subcellular location is the target cell membrane. Functionally, synergistic toxin that induces or increases a cytolytic effect when combined with CSTX-1 (AC P81694) or CSTX-9 (AC P58604). When alone, has a weak insecticidal activity, with an unknown molecular target. This is Toxin CSTX-8 from Cupiennius salei (American wandering spider).